The chain runs to 269 residues: 2' cyclic ADP-D-ribose synthase AbTIR (269 aa).

The stretch at 31 to 99 forms a coiled coil; sequence LKTKLSEISR…KQQKDEIEHQ (69 aa). In terms of domain architecture, TIR spans 133–266; the sequence is PEYDLFISHA…EIAHQLADVI (134 aa). NAD(+)-binding residues include serine 143, lysine 172, and lysine 202. Glutamate 208 is a catalytic residue. Lysine 245 contributes to the NAD(+) binding site.

Homodimer. In the presence of NAD(+) analog 8-amino-isoquinoline adenine dinucleotide (3AD) forms filaments with 3AD between monomers; conformational changes occur upon 3AD binding.

It carries out the reaction NAD(+) = 2'cADPR + nicotinamide + H(+). The enzyme catalyses NAD(+) + H2O = ADP-D-ribose + nicotinamide + H(+). It catalyses the reaction NADP(+) + H2O = ADP-D-ribose 2'-phosphate + nicotinamide + H(+). Its function is as follows. NAD(+) hydrolase (NADase) that catalyzes cleavage of NAD(+) into ADP-D-ribose (ADPR) and nicotinamide. In addition to ADPR, also generates a cyclization variant of cyclic ADPR (cADPR), termed 2'cADPR (v-cADPR). Cleaves NADP(+), but does not cyclize the product. This Acinetobacter baumannii (strain 1295743) protein is 2' cyclic ADP-D-ribose synthase AbTIR.